The primary structure comprises 355 residues: Probable dual-specificity RNA methyltransferase RlmN (355 aa).

Glu-89 acts as the Proton acceptor in catalysis. The Radical SAM core domain occupies 95 to 322 (YENRKTVCLS…KRLGVPTSIR (228 aa)). Residues Cys-102 and Cys-333 are joined by a disulfide bond. [4Fe-4S] cluster contacts are provided by Cys-109, Cys-113, and Cys-116. Residues 159–160 (GE), Ser-191, 214–216 (SLH), and Asn-290 contribute to the S-adenosyl-L-methionine site. Catalysis depends on Cys-333, which acts as the S-methylcysteine intermediate.

This sequence belongs to the radical SAM superfamily. RlmN family. [4Fe-4S] cluster is required as a cofactor.

It is found in the cytoplasm. The enzyme catalyses adenosine(2503) in 23S rRNA + 2 reduced [2Fe-2S]-[ferredoxin] + 2 S-adenosyl-L-methionine = 2-methyladenosine(2503) in 23S rRNA + 5'-deoxyadenosine + L-methionine + 2 oxidized [2Fe-2S]-[ferredoxin] + S-adenosyl-L-homocysteine. It catalyses the reaction adenosine(37) in tRNA + 2 reduced [2Fe-2S]-[ferredoxin] + 2 S-adenosyl-L-methionine = 2-methyladenosine(37) in tRNA + 5'-deoxyadenosine + L-methionine + 2 oxidized [2Fe-2S]-[ferredoxin] + S-adenosyl-L-homocysteine. In terms of biological role, specifically methylates position 2 of adenine 2503 in 23S rRNA and position 2 of adenine 37 in tRNAs. In Thermus thermophilus (strain ATCC 27634 / DSM 579 / HB8), this protein is Probable dual-specificity RNA methyltransferase RlmN.